The primary structure comprises 615 residues: Putative DNA ligase 205R (615 aa).

Lys-101 functions as the N6-AMP-lysine intermediate in the catalytic mechanism.

The protein belongs to the NAD-dependent DNA ligase family.

It catalyses the reaction NAD(+) + (deoxyribonucleotide)n-3'-hydroxyl + 5'-phospho-(deoxyribonucleotide)m = (deoxyribonucleotide)n+m + AMP + beta-nicotinamide D-nucleotide.. In terms of biological role, catalyzes the formation of phosphodiester linkages between 5'-phosphoryl and 3'-hydroxyl groups in double-stranded DNA using NAD as a coenzyme and as the energy source for the reaction. The sequence is that of Putative DNA ligase 205R from Invertebrate iridescent virus 6 (IIV-6).